Consider the following 156-residue polypeptide: Small ribosomal subunit protein uS7 (156 aa).

This sequence belongs to the universal ribosomal protein uS7 family. Part of the 30S ribosomal subunit. Contacts proteins S9 and S11.

Its function is as follows. One of the primary rRNA binding proteins, it binds directly to 16S rRNA where it nucleates assembly of the head domain of the 30S subunit. Is located at the subunit interface close to the decoding center, probably blocks exit of the E-site tRNA. This chain is Small ribosomal subunit protein uS7, found in Streptomyces griseus subsp. griseus (strain JCM 4626 / CBS 651.72 / NBRC 13350 / KCC S-0626 / ISP 5235).